The chain runs to 163 residues: Lipoprotein signal peptidase (163 aa).

Transmembrane regions (helical) follow at residues 3–23 (IPLIYNRILILFFFIANIIIL), 70–90 (NYILCLISSIAILIILKTMYN), and 94–114 (IENFFYNIPSAFIISGAIGNF). Residues Asp-125 and Asp-143 contribute to the active site. Residues 134-154 (WHFATFNIADVSIFIGSVLFI) form a helical membrane-spanning segment.

It belongs to the peptidase A8 family.

It localises to the cell membrane. It catalyses the reaction Release of signal peptides from bacterial membrane prolipoproteins. Hydrolyzes -Xaa-Yaa-Zaa-|-(S,diacylglyceryl)Cys-, in which Xaa is hydrophobic (preferably Leu), and Yaa (Ala or Ser) and Zaa (Gly or Ala) have small, neutral side chains.. It participates in protein modification; lipoprotein biosynthesis (signal peptide cleavage). Functionally, this protein specifically catalyzes the removal of signal peptides from prolipoproteins. The chain is Lipoprotein signal peptidase from Buchnera aphidicola subsp. Baizongia pistaciae (strain Bp).